Reading from the N-terminus, the 251-residue chain is uncharacterized protein (251 aa).

12–36 (VVTGASSGIGEATARTLAAQGFHVV) is a binding site for NADP(+). Ser-136 provides a ligand contact to substrate. The active-site Proton acceptor is Tyr-149.

The protein belongs to the short-chain dehydrogenases/reductases (SDR) family.

This is an uncharacterized protein from Mycobacterium tuberculosis (strain CDC 1551 / Oshkosh).